The following is a 451-amino-acid chain: Tubulin gamma-1 chain (451 aa).

Residue Ser131 is modified to Phosphoserine; by BRSK1. 142–148 (AGGTGSG) serves as a coordination point for GTP.

It belongs to the tubulin family. In terms of assembly, component of the gamma-tubulin ring complex (gTuRC) consisting of TUBGCP2, TUBGCP3, TUBGCP4, TUBGCP5 and TUBGCP6 and gamma-tubulin TUBG1 or TUBG2. TUBGCP2, TUBGCP3, TUBGCP4, TUBGCP5 and TUBGCP6 assemble in a 5:5:2:1:1 stoichiometry; each is associated with a gamma-tubulin, thereby arranging 14 gamma-tubulins in a helical manner. Gamma-tubulin at the first position is blocked by TUBGCP3 at the last position, allowing 13 protafilaments to grow into a microtubule. The gTuRC (via TUBGCP3 and TUBGCP6) interacts with ACTB and MZT1; the interactions form a luminal bridge that stabilizes the initial structure during complex assembly. The gTuRC (via TUBGCP2) interacts with MZT2A/MZT2B and CDK5RAP2 (via CM1 motif); the interactions play a role in gTuRC activation. Interacts with alpha-beta tubulin heterodimers; the interaction allows microtubules to nucleate from the gTuRC. Interacts with B9D2. Interacts with CDK5RAP2; the interaction is leading to centrosomal localization of TUBG1 and CDK5RAP2. Interacts with CIMAP3. Interacts with SAS6 and NUP62 at the centrosome. Interacts with EML3 (phosphorylated at 'Thr-881') and HAUS8. Interacts with DNM2; this interaction may participate in centrosome cohesion. Interacts with CCDC66. Phosphorylation at Ser-131 by BRSK1 regulates centrosome duplication, possibly by mediating relocation of gamma-tubulin and its associated proteins from the cytoplasm to the centrosome.

Its subcellular location is the cytoplasm. It localises to the cytoskeleton. It is found in the microtubule organizing center. The protein resides in the centrosome. The protein localises to the spindle. In terms of biological role, tubulin is the major constituent of microtubules, protein filaments consisting of alpha- and beta-tubulin heterodimers. Gamma-tubulin is a key component of the gamma-tubulin ring complex (gTuRC) which mediates microtubule nucleation. The gTuRC regulates the minus-end nucleation of alpha-beta tubulin heterodimers that grow into microtubule protafilaments, a critical step in centrosome duplication and spindle formation. The sequence is that of Tubulin gamma-1 chain from Canis lupus familiaris (Dog).